We begin with the raw amino-acid sequence, 305 residues long: tRNA dimethylallyltransferase (305 aa).

Gly8–Thr15 provides a ligand contact to ATP. Residue Thr10–Thr15 coordinates substrate. The tract at residues Asp33 to Gln36 is interaction with substrate tRNA.

It belongs to the IPP transferase family. Monomer. Mg(2+) is required as a cofactor.

The catalysed reaction is adenosine(37) in tRNA + dimethylallyl diphosphate = N(6)-dimethylallyladenosine(37) in tRNA + diphosphate. Catalyzes the transfer of a dimethylallyl group onto the adenine at position 37 in tRNAs that read codons beginning with uridine, leading to the formation of N6-(dimethylallyl)adenosine (i(6)A). The chain is tRNA dimethylallyltransferase from Anaeromyxobacter sp. (strain K).